The sequence spans 183 residues: Type II secretion system protein H (183 aa).

Positions 1–8 (MRRHRQSG) are cleaved as a propeptide — leader sequence. The residue at position 9 (Phe-9) is an N-methylphenylalanine. A helical transmembrane segment spans residues 9 to 28 (FTLLEVLLVAMLMGLVATAV).

Belongs to the GSP H family. Type II secretion is composed of four main components: the outer membrane complex, the inner membrane complex, the cytoplasmic secretion ATPase and the periplasm-spanning pseudopilus. Interacts with core component ExeG. Post-translationally, cleaved by prepilin peptidase. Methylated by prepilin peptidase at the amino group of the N-terminal phenylalanine once the leader sequence is cleaved by prepilin peptidase.

It is found in the cell inner membrane. Functionally, component of the type II secretion system required for the energy-dependent secretion of extracellular factors such as proteases and toxins from the periplasm. Part of the pseudopilus tip complex that is critical for the recognition and binding of secretion substrates. This is Type II secretion system protein H (exeH) from Aeromonas hydrophila.